A 270-amino-acid chain; its full sequence is Cerberus (270 aa).

An N-terminal signal peptide occupies residues 1-20; sequence MLLNVLRICIIVCLVNDGAG. 3 N-linked (GlcNAc...) asparagine glycosylation sites follow: asparagine 103, asparagine 112, and asparagine 154. 4 disulfide bridges follow: cysteine 169–cysteine 215, cysteine 183–cysteine 229, cysteine 193–cysteine 245, and cysteine 197–cysteine 247. Positions 169–253 constitute a CTCK domain; sequence CKTLPFTQNI…ECTCEAHKSN (85 aa). Asparagine 228 carries N-linked (GlcNAc...) asparagine glycosylation.

It belongs to the DAN family. The long chain interacts with nodal/nr-1, bmp4 and wnt8, thereby inhibiting their function. The short chain interacts with nodal/nr-1 but not bmp4 or wnt8. A component of the Nieuwkoop signaling center in the blastula. Expressed transiently in a broad anterior domain of the gastrula, including the anterior endoderm of the Spemann's organizer and more laterally the cardiac primordia. Expression is excluded from the prospective prechordal plate region and the ring of cells that give rise to the trunk-tail mesoderm.

Its subcellular location is the secreted. Inhibits wnt, nodal/nr-1 and bmp signaling in the embryo to promote head formation and anterior neural induction. Within the endoderm, acts as an essential mediator of nodal/nr-1-induced cardiogenesis in the overlying mesoderm. The sequence is that of Cerberus from Xenopus laevis (African clawed frog).